A 198-amino-acid polypeptide reads, in one-letter code: MLYPTPIAKLIDSFSKLPGIGAKTATRLAFYTISMSDEDVNDFAKNLLAAKRELTYCSVCGRLTDDDPCIICTDETRDRTKILVVEDSKDVSAMEKIQEYRGLYHVLQGLISPMNGVGPDDINLKSLITRLMDSEVDEVIIATNATADGEATSMYISRVLKPAGIKVTRLARGLAVGSDIEYADEVTLLRAIENRTEL.

The C4-type zinc finger occupies 57 to 72 (CSVCGRLTDDDPCIIC). A Toprim domain is found at 80 to 175 (TKILVVEDSK…KVTRLARGLA (96 aa)).

It belongs to the RecR family.

Its function is as follows. May play a role in DNA repair. It seems to be involved in an RecBC-independent recombinational process of DNA repair. It may act with RecF and RecO. In Streptococcus thermophilus (strain CNRZ 1066), this protein is Recombination protein RecR.